The chain runs to 455 residues: Ribulose bisphosphate carboxylase large chain (455 aa).

An N6,N6,N6-trimethyllysine modification is found at Lys-5. Asn-114 and Thr-164 together coordinate substrate. Lys-166 functions as the Proton acceptor in the catalytic mechanism. Lys-168 contacts substrate. Mg(2+) is bound by residues Lys-192, Asp-194, and Glu-195. Lys-192 is modified (N6-carboxylysine). Catalysis depends on His-285, which acts as the Proton acceptor. Substrate is bound by residues Arg-286, His-318, and Ser-370.

The protein belongs to the RuBisCO large chain family. Type I subfamily. Heterohexadecamer of 8 large chains and 8 small chains; disulfide-linked. The disulfide link is formed within the large subunit homodimers. Requires Mg(2+) as cofactor. In terms of processing, the disulfide bond which can form in the large chain dimeric partners within the hexadecamer appears to be associated with oxidative stress and protein turnover.

It is found in the plastid. It localises to the chloroplast. The catalysed reaction is 2 (2R)-3-phosphoglycerate + 2 H(+) = D-ribulose 1,5-bisphosphate + CO2 + H2O. It carries out the reaction D-ribulose 1,5-bisphosphate + O2 = 2-phosphoglycolate + (2R)-3-phosphoglycerate + 2 H(+). Functionally, ruBisCO catalyzes two reactions: the carboxylation of D-ribulose 1,5-bisphosphate, the primary event in carbon dioxide fixation, as well as the oxidative fragmentation of the pentose substrate in the photorespiration process. Both reactions occur simultaneously and in competition at the same active site. This is Ribulose bisphosphate carboxylase large chain from Lupinus digitatus (Lupine).